We begin with the raw amino-acid sequence, 456 residues long: E3 ubiquitin-protein ligase RNF25 (456 aa).

Positions 18–127 (SEVEVLESIY…EKGKEILTDN (110 aa)) constitute an RWD domain. C134, C137, C152, H154, H157, C160, C195, and C198 together coordinate Zn(2+). An RING-type zinc finger spans residues 134 to 199 (CVICLYGFQE…AVGVQCPVCR (66 aa)). Residues 269–456 (LEPESAVDVS…PLGLESEEGS (188 aa)) form a disordered region. The span at 288 to 332 (SAEQSTSLADQSTLPTSLPMTTQYTYEKTSGAGPNQQRPGETQKS) shows a compositional bias: polar residues. 2 stretches are compositionally biased toward basic and acidic residues: residues 364–388 (SEIHELPPPEKPLKETVDLKAEPRN) and 410–421 (RTRDCARWERSK).

This sequence belongs to the RNF25 family. As to quaternary structure, interacts with UBE2D2, and may also interact with UBE2E1 and UBE2E3. Interacts with RELA/p65. Post-translationally, ubiquitinated; autoubiquitinated. In terms of tissue distribution, ubiquitous.

Its subcellular location is the cytoplasm. It carries out the reaction S-ubiquitinyl-[E2 ubiquitin-conjugating enzyme]-L-cysteine + [acceptor protein]-L-lysine = [E2 ubiquitin-conjugating enzyme]-L-cysteine + N(6)-ubiquitinyl-[acceptor protein]-L-lysine.. It functions in the pathway protein modification; protein ubiquitination. E3 ubiquitin-protein ligase that plays a key role in the RNF14-RNF25 translation quality control pathway, a pathway that takes place when a ribosome has stalled during translation, and which promotes ubiquitination and degradation of translation factors on stalled ribosomes. Catalyzes ubiquitination of RPS27A in response to ribosome collisions, promoting activation of RNF14. RNF25 catalyzes ubiquitination of other ribosomal proteins on stalled ribosomes, such as RPL0, RPL1, RPL12, RPS13 and RPS17. Also involved in ubiquitination and degradation of stalled ETF1/eRF1. Independently of its function in the response to stalled ribosomes, mediates ubiquitination and subsequent proteasomal degradation of NKD2. May also stimulate transcription mediated by NF-kappa-B via its interaction with RELA/p65. This Mus musculus (Mouse) protein is E3 ubiquitin-protein ligase RNF25.